Reading from the N-terminus, the 327-residue chain is tRNA-dihydrouridine(20/20a) synthase (327 aa).

Residues 17-19 (PML) and Gln-69 each bind FMN. The active-site Proton donor is Cys-99. FMN-binding positions include Lys-138, His-170, 210-212 (NGG), and 232-233 (GR).

This sequence belongs to the Dus family. DusA subfamily. The cofactor is FMN.

It catalyses the reaction 5,6-dihydrouridine(20) in tRNA + NADP(+) = uridine(20) in tRNA + NADPH + H(+). The catalysed reaction is 5,6-dihydrouridine(20) in tRNA + NAD(+) = uridine(20) in tRNA + NADH + H(+). The enzyme catalyses 5,6-dihydrouridine(20a) in tRNA + NADP(+) = uridine(20a) in tRNA + NADPH + H(+). It carries out the reaction 5,6-dihydrouridine(20a) in tRNA + NAD(+) = uridine(20a) in tRNA + NADH + H(+). Its function is as follows. Catalyzes the synthesis of 5,6-dihydrouridine (D), a modified base found in the D-loop of most tRNAs, via the reduction of the C5-C6 double bond in target uridines. Specifically modifies U20 and U20a in tRNAs. This is tRNA-dihydrouridine(20/20a) synthase from Pasteurella multocida (strain Pm70).